The sequence spans 55 residues: MEDSSLSSGVDVDKGFAIAFVVLLFLFLIVMIFRCAKLVKNPYKASSTTTEPSLS.

The helical transmembrane segment at F16–A36 threads the bilayer.

It localises to the membrane. The polypeptide is Cortexin domain containing 2 (Homo sapiens (Human)).